Consider the following 265-residue polypeptide: Polyglutamine-binding protein 1 (265 aa).

The 35-residue stretch at 46 to 80 (EGLPPSWYKVFDPSCGLPYYWNADTDLVSWLSPHD) folds into the WW domain. Ser-94 is subject to Phosphoserine. A disordered region spans residues 94-265 (SSNADAEEKL…AEASRTKQQD (172 aa)). Basic and acidic residues predominate over residues 99 to 175 (AEEKLDRSHD…DKADREEGKE (77 aa)). A run of 15 repeats spans residues 104–110 (DRSHDKS), 111–117 (DRGHDKS), 118–124 (DRSHEKP), 125–131 (DRGHDKS), 132–138 (DRGHDKS), 139–140 (DR), 141–142 (DR), 143–144 (ER), 150–151 (DR), 152–153 (ER), 154–155 (ER), 156–157 (DR), 158–159 (ER), 160–161 (DR), and 162–163 (DR). A 5 X 7 AA approximate tandem repeats of D-R-[SG]-H-D-K-S region spans residues 104–138 (DRSHDKSDRGHDKSDRSHEKPDRGHDKSDRGHDKS). A 3 X 2 AA tandem repeats of [DE]-R region spans residues 139–144 (DRDRER). Residues 150-163 (DRERERDRERDRDR) form a 7 X 2 AA tandem repeats of [DE]-R region. The segment at 245–255 (YPSPGAVLRAN) is important for interaction with TXNL4A. Ser-247 is subject to Phosphoserine.

Interacts with POU3F2/Brn-2, ATXN1, TXNL4A, HTT and AR. Interaction with ATXN1 correlates positively with the length of the polyglutamine tract. Interacts with RNA polymerase II large subunit in a phosphorylation-dependent manner. Forms a ternary complex with ATXN1 mutant and phosphorylated RNA polymerase II. Interacts (via C-terminus) with TXNL4A and CD2BP2. Interacts (via WW domain) with ATN1 and SF3B1, and may interact with additional splice factors. Interacts (via WW domain) with WBP11; Leading to reduce interaction between PQBP1 and TXNL4A. Interacts with CAPRIN1. Interacts with DDX1. Interacts with SFPQ. Interacts with KHSRP.

It is found in the nucleus. Its subcellular location is the nucleus speckle. The protein localises to the cytoplasmic granule. Intrinsically disordered protein that acts as a scaffold, and which is involved in different processes, such as pre-mRNA splicing, transcription regulation, innate immunity and neuron development. Interacts with splicing-related factors via the intrinsically disordered region and regulates alternative splicing of target pre-mRNA species. May suppress the ability of POU3F2 to transactivate the DRD1 gene in a POU3F2 dependent manner. Can activate transcription directly or via association with the transcription machinery. May be involved in ATXN1 mutant-induced cell death. The interaction with ATXN1 mutant reduces levels of phosphorylated RNA polymerase II large subunit. Involved in the assembly of cytoplasmic stress granule, possibly by participating in the transport of neuronal RNA granules. Also acts as an innate immune sensor of infection by retroviruses, by detecting the presence of reverse-transcribed DNA in the cytosol. Directly binds retroviral reverse-transcribed DNA in the cytosol and interacts with CGAS, leading to activate the cGAS-STING signaling pathway, triggering type-I interferon production. This Pongo pygmaeus (Bornean orangutan) protein is Polyglutamine-binding protein 1 (PQBP1).